The sequence spans 252 residues: Imidazole glycerol phosphate synthase subunit HisF (252 aa).

Active-site residues include Asp11 and Asp130.

The protein belongs to the HisA/HisF family. As to quaternary structure, heterodimer of HisH and HisF.

Its subcellular location is the cytoplasm. The enzyme catalyses 5-[(5-phospho-1-deoxy-D-ribulos-1-ylimino)methylamino]-1-(5-phospho-beta-D-ribosyl)imidazole-4-carboxamide + L-glutamine = D-erythro-1-(imidazol-4-yl)glycerol 3-phosphate + 5-amino-1-(5-phospho-beta-D-ribosyl)imidazole-4-carboxamide + L-glutamate + H(+). It participates in amino-acid biosynthesis; L-histidine biosynthesis; L-histidine from 5-phospho-alpha-D-ribose 1-diphosphate: step 5/9. IGPS catalyzes the conversion of PRFAR and glutamine to IGP, AICAR and glutamate. The HisF subunit catalyzes the cyclization activity that produces IGP and AICAR from PRFAR using the ammonia provided by the HisH subunit. In Geobacillus thermodenitrificans (strain NG80-2), this protein is Imidazole glycerol phosphate synthase subunit HisF.